The sequence spans 485 residues: Membrane-bound lytic murein transglycosylase F (485 aa).

An N-terminal signal peptide occupies residues 1–29; the sequence is MFAHTALRQRCAKWLFATGLFLLLGACVE. The interval 30–267 is non-LT domain; it reads KPSTLERVKE…RLKDRYYGHV (238 aa). Positions 268-485 are LT domain; it reads DVLGYVGAYT…DKPADQSPPM (218 aa). Glu-314 is an active-site residue. The segment at 465–485 is disordered; sequence EGNLHVPGVNKDKPADQSPPM.

This sequence in the N-terminal section; belongs to the bacterial solute-binding protein 3 family. The protein in the C-terminal section; belongs to the transglycosylase Slt family.

The protein localises to the cell outer membrane. The enzyme catalyses Exolytic cleavage of the (1-&gt;4)-beta-glycosidic linkage between N-acetylmuramic acid (MurNAc) and N-acetylglucosamine (GlcNAc) residues in peptidoglycan, from either the reducing or the non-reducing ends of the peptidoglycan chains, with concomitant formation of a 1,6-anhydrobond in the MurNAc residue.. Its function is as follows. Murein-degrading enzyme that degrades murein glycan strands and insoluble, high-molecular weight murein sacculi, with the concomitant formation of a 1,6-anhydromuramoyl product. Lytic transglycosylases (LTs) play an integral role in the metabolism of the peptidoglycan (PG) sacculus. Their lytic action creates space within the PG sacculus to allow for its expansion as well as for the insertion of various structures such as secretion systems and flagella. The polypeptide is Membrane-bound lytic murein transglycosylase F (Pseudomonas putida (strain GB-1)).